The following is a 1229-amino-acid chain: Alpha,alpha-trehalose-phosphate synthase [UDP-forming] 2 (1229 aa).

The disordered stretch occupies residues V196–S233. The span at T213–A225 shows a compositional bias: basic and acidic residues.

The protein in the N-terminal section; belongs to the glycosyltransferase 20 family. It in the C-terminal section; belongs to the gob-1 trehalose phosphatase family.

The catalysed reaction is D-glucose 6-phosphate + UDP-alpha-D-glucose = alpha,alpha-trehalose 6-phosphate + UDP + H(+). Functionally, catalyzes the production of trehalose from glucose-6-phosphate and UDP-alpha-D-glucose in a 2 step process. The polypeptide is Alpha,alpha-trehalose-phosphate synthase [UDP-forming] 2 (tps-2) (Caenorhabditis elegans).